Reading from the N-terminus, the 130-residue chain is Fluoride-specific ion channel FluC (130 aa).

Transmembrane regions (helical) follow at residues 2–22 (GLLL…RFAL), 35–55 (IGIL…AAFL), 72–92 (LFVT…LDIL), and 107–127 (ILVS…FIMG). Na(+) is bound by residues glycine 79 and threonine 82.

It belongs to the fluoride channel Fluc/FEX (TC 1.A.43) family.

The protein localises to the cell inner membrane. It carries out the reaction fluoride(in) = fluoride(out). With respect to regulation, na(+) is not transported, but it plays an essential structural role and its presence is essential for fluoride channel function. Its function is as follows. Fluoride-specific ion channel. Important for reducing fluoride concentration in the cell, thus reducing its toxicity. This is Fluoride-specific ion channel FluC from Francisella philomiragia subsp. philomiragia (strain ATCC 25017 / CCUG 19701 / FSC 153 / O#319-036).